Reading from the N-terminus, the 249-residue chain is Methyl-coenzyme M reductase I subunit gamma (249 aa).

Arginine 120 is a coenzyme M binding site.

Belongs to the methyl-coenzyme M reductase gamma subunit family. As to quaternary structure, MCR is a hexamer of two alpha, two beta, and two gamma chains, forming a dimer of heterotrimers. Coenzyme F430 is required as a cofactor.

It is found in the cytoplasm. It carries out the reaction coenzyme B + methyl-coenzyme M = methane + coenzyme M-coenzyme B heterodisulfide. Its pathway is one-carbon metabolism; methyl-coenzyme M reduction; methane from methyl-coenzyme M: step 1/1. Methyl-coenzyme M reductase activity is inhibited by 3-nitrooxypropanol (3-NOP) in vitro and in vivo, by oxidation of its active site Ni(I), which stops both growth and methanogenesis. Is also inhibited by the reaction product CoM-S-S-CoB. In terms of biological role, component of the methyl-coenzyme M reductase (MCR) I that catalyzes the reductive cleavage of methyl-coenzyme M (CoM-S-CH3 or 2-(methylthio)ethanesulfonate) using coenzyme B (CoB or 7-mercaptoheptanoylthreonine phosphate) as reductant which results in the production of methane and the mixed heterodisulfide of CoB and CoM (CoM-S-S-CoB). This is the final step in methanogenesis. Neither N-6-mercaptohexanoylthreonine phosphate (H-S-HxoTP) nor N-8-mercaptooctanoylthreonine phosphate (H-SOcoTP) nor any other thiol compound such as CoA or CoM can substitute for CoB as the electron donor. This Methanothermobacter marburgensis (strain ATCC BAA-927 / DSM 2133 / JCM 14651 / NBRC 100331 / OCM 82 / Marburg) (Methanobacterium thermoautotrophicum) protein is Methyl-coenzyme M reductase I subunit gamma (mcrG).